The following is a 549-amino-acid chain: uncharacterized protein (549 aa).

This is an uncharacterized protein from Acanthamoeba polyphaga (Amoeba).